The primary structure comprises 496 residues: Apolipoprotein N-acyltransferase (496 aa).

Helical transmembrane passes span 6–26 (IICLLLGILSGLVFAPIFFIP), 50–70 (FGYLFGFGHFLSGMYWISIGV), 77–97 (FWWAIPFALFGLPIILAFFIS), 114–134 (LIFCLLWVLFEWIRSWILTGL), 148–168 (ILIQPLSITGIYGLSFIVIYI), and 183–203 (LKILLASSMLILTVMVIYGAV). Positions 220–464 (VQPSIPQTAK…QGLIPQKLTT (245 aa)) constitute a CN hydrolase domain. Catalysis depends on E259, which acts as the Proton acceptor. Residue K322 is part of the active site. C372 functions as the Nucleophile in the catalytic mechanism. Residues 474-494 (FAMLLSIVFIILIHYLLSLIF) traverse the membrane as a helical segment.

It belongs to the CN hydrolase family. Apolipoprotein N-acyltransferase subfamily.

The protein resides in the cell inner membrane. It carries out the reaction N-terminal S-1,2-diacyl-sn-glyceryl-L-cysteinyl-[lipoprotein] + a glycerophospholipid = N-acyl-S-1,2-diacyl-sn-glyceryl-L-cysteinyl-[lipoprotein] + a 2-acyl-sn-glycero-3-phospholipid + H(+). It functions in the pathway protein modification; lipoprotein biosynthesis (N-acyl transfer). Functionally, catalyzes the phospholipid dependent N-acylation of the N-terminal cysteine of apolipoprotein, the last step in lipoprotein maturation. The sequence is that of Apolipoprotein N-acyltransferase from Rickettsia prowazekii (strain Madrid E).